Reading from the N-terminus, the 450-residue chain is UDP-N-acetylmuramoylalanine--D-glutamate ligase (450 aa).

Residue 115 to 121 (GTNGKTT) participates in ATP binding.

Belongs to the MurCDEF family.

The protein resides in the cytoplasm. The catalysed reaction is UDP-N-acetyl-alpha-D-muramoyl-L-alanine + D-glutamate + ATP = UDP-N-acetyl-alpha-D-muramoyl-L-alanyl-D-glutamate + ADP + phosphate + H(+). Its pathway is cell wall biogenesis; peptidoglycan biosynthesis. Cell wall formation. Catalyzes the addition of glutamate to the nucleotide precursor UDP-N-acetylmuramoyl-L-alanine (UMA). This Desulfatibacillum aliphaticivorans protein is UDP-N-acetylmuramoylalanine--D-glutamate ligase.